A 707-amino-acid polypeptide reads, in one-letter code: Integrator complex subunit 13 (707 aa).

Basic and acidic residues predominate over residues 565–625 (PPEEEERKKR…AEAEVIKDSP (61 aa)). A disordered region spans residues 565–651 (PPEEEERKKR…TGPAEKSKGP (87 aa)). Positions 567–622 (EEEERKKRGRKREDKEEKAEKPPKENEHEKKWQESERVKSVLDREKEDLAEAEVIK) form a coiled coil. Residues 573–583 (KRGRKREDKEE) carry the Nuclear localization signal (NLS) motif. Positions 650 to 695 (GPMSLLSLWSSRINTANSRKHQEFVGRLNSVNNKAELYQHLKEENG) are cleavage module binding motif (CMBM).

The protein belongs to the Integrator subunit 13 family. In terms of assembly, component of the Integrator complex, composed of core subunits INTS1, INTS2, INTS3, INTS4, INTS5, INTS6, INTS7, INTS8, INTS9/RC74, INTS10, INTS11/CPSF3L, INTS12, INTS13, INTS14 and INTS15. The core complex associates with protein phosphatase 2A subunits PPP2CA and PPP2R1A, to form the Integrator-PP2A (INTAC) complex. INTS13 is part of the tail subcomplex, composed of INTS10, INTS13, INTS14 and INTS15.

The protein resides in the nucleus. Its subcellular location is the cytoplasm. Its function is as follows. Component of the integrator complex, a multiprotein complex that terminates RNA polymerase II (Pol II) transcription in the promoter-proximal region of genes. The integrator complex provides a quality checkpoint during transcription elongation by driving premature transcription termination of transcripts that are unfavorably configured for transcriptional elongation: the complex terminates transcription by (1) catalyzing dephosphorylation of the C-terminal domain (CTD) of Pol II subunit POLR2A/RPB1 and SUPT5H/SPT5, (2) degrading the exiting nascent RNA transcript via endonuclease activity and (3) promoting the release of Pol II from bound DNA. The integrator complex is also involved in terminating the synthesis of non-coding Pol II transcripts, such as enhancer RNAs (eRNAs), small nuclear RNAs (snRNAs), telomerase RNAs and long non-coding RNAs (lncRNAs). Within the integrator complex, INTS13 is part of the integrator tail module and acts as a platform for the recruitment of transcription factors at promoters. This chain is Integrator complex subunit 13, found in Xenopus tropicalis (Western clawed frog).